Reading from the N-terminus, the 819-residue chain is Eukaryotic translation initiation factor 3 subunit C (819 aa).

Positions 1–106 are disordered; that stretch reads MSRFFLKTYE…DSSDEEDGKK (106 aa). Composition is skewed to acidic residues over residues 17–41 and 47–59; these read GEEE…ELSD and DSDE…EDND. The PCI domain occupies 620–795; the sequence is FHQHINLDLI…EYIIFERGEE (176 aa).

The protein belongs to the eIF-3 subunit C family. As to quaternary structure, component of the eukaryotic translation initiation factor 3 (eIF-3) complex.

Its subcellular location is the cytoplasm. In terms of biological role, component of the eukaryotic translation initiation factor 3 (eIF-3) complex, which is involved in protein synthesis of a specialized repertoire of mRNAs and, together with other initiation factors, stimulates binding of mRNA and methionyl-tRNAi to the 40S ribosome. The eIF-3 complex specifically targets and initiates translation of a subset of mRNAs involved in cell proliferation. The polypeptide is Eukaryotic translation initiation factor 3 subunit C (Kluyveromyces lactis (strain ATCC 8585 / CBS 2359 / DSM 70799 / NBRC 1267 / NRRL Y-1140 / WM37) (Yeast)).